The primary structure comprises 535 residues: MRLRNGTVATVLAFITSFLTLSWYTTWQNGKEKVIAYQREFLALKERLRIAEHRISQRSSELSAIVQQFKRVEAETNRSKDPVNKFSDDTLKILKELTSKKSLQVPSIYYHLPHLLQNEGSLQPAVQIGNGRTGVSIVMGIPTVKREVKSYLIETLHSLIDNLYPEEKLDCVIVVFIGETDTDYVNGVVANLEKEFSKEISSGLVEIISPPESYYPDLTNLKETFGDSKERVRWRTKQNLDYCFLMMYAQEKGTYYIQLEDDIIVKQNYFNTIKNFALQLSSEEWMILEFSQLGFIGKMFQAPDLTLIVEFIFMFYKEKPIDWLLDHILWVKVCNPEKDAKHCDRQKANLRIRFRPSLFQHVGLHSSLTGKIQKLTDKDYMKPLLLKIHVNPPAEVSTSLKVYQGHTLEKTYMGEDFFWAITPVAGDYILFKFDKPVNVESYLFHSGNQDHPGDILLNTTVEVLPLKSEGLDISKETKDKRLEDGYFRIGKFENGVAEGMVDPSLNPISAFRLSVIQNSAVWAILNEIHIKKVTN.

At 1-6 (MRLRNG) the chain is on the cytoplasmic side. Residues 7-27 (TVATVLAFITSFLTLSWYTTW) form a helical; Signal-anchor for type II membrane protein membrane-spanning segment. Residues 28 to 535 (QNGKEKVIAY…NEIHIKKVTN (508 aa)) are Lumenal-facing. Residues 31–57 (KEKVIAYQREFLALKERLRIAEHRISQ) are a coiled coil. Asn-77 and Asn-458 each carry an N-linked (GlcNAc...) asparagine glycan. Ser-474 carries the phosphoserine modification.

The protein belongs to the glycosyltransferase 54 family. Requires a divalent metal cation as cofactor. N-glycosylated. In terms of tissue distribution, highly expressed in small intestine, kidney, lung and spleen. Weakly expressed in brain, heart and liver.

It is found in the golgi apparatus membrane. The protein localises to the secreted. The enzyme catalyses N(4)-{beta-D-GlcNAc-(1-&gt;2)-alpha-D-Man-(1-&gt;3)-[beta-D-GlcNAc-(1-&gt;2)-alpha-D-Man-(1-&gt;6)]-beta-D-Man-(1-&gt;4)-beta-D-GlcNAc-(1-&gt;4)-beta-D-GlcNAc}-L-asparaginyl-[protein] + UDP-N-acetyl-alpha-D-glucosamine = N(4)-{beta-D-GlcNAc-(1-&gt;2)-[beta-D-GlcNAc-(1-&gt;4)]-alpha-D-Man-(1-&gt;3)-[beta-D-GlcNAc-(1-&gt;2)-alpha-D-Man-(1-&gt;6)]-beta-D-Man-(1-&gt;4)-beta-D-GlcNAc-(1-&gt;4)-beta-D-GlcNAc}-L-asparaginyl-[protein] + UDP + H(+). The catalysed reaction is an N(4)-{beta-D-GlcNAc-(1-&gt;2)-alpha-D-Man-(1-&gt;3)-[alpha-D-Man-(1-&gt;6)]-beta-D-Man-(1-&gt;4)-beta-D-GlcNAc-(1-&gt;4)-beta-D-GlcNAc}-L-asparaginyl-[protein] + UDP-N-acetyl-alpha-D-glucosamine = an N(4)-{beta-D-GlcNAc-(1-&gt;2)-[beta-D-GlcNAc-(1-&gt;4)]-alpha-D-Man-(1-&gt;3)-[alpha-D-Man-(1-&gt;6)]-beta-D-Man-(1-&gt;4)-beta-D-GlcNAc-(1-&gt;4)-beta-D-GlcNAc}-L-asparaginyl-[protein] + UDP + H(+). It carries out the reaction an N(4)-{beta-D-GlcNAc-(1-&gt;2)-alpha-D-Man-(1-&gt;3)-[beta-D-GlcNAc-(1-&gt;2)-[beta-D-GlcNAc-(1-&gt;6)]-alpha-D-Man-(1-&gt;6)]-beta-D-Man-(1-&gt;4)-beta-D-GlcNAc-(1-&gt;4)-beta-D-GlcNAc}-L-asparaginyl-[protein] + UDP-N-acetyl-alpha-D-glucosamine = an N(4)-{beta-D-GlcNAc-(1-&gt;2)-[beta-D-GlcNAc-(1-&gt;4)]-alpha-D-Man-(1-&gt;3)-[beta-D-GlcNAc-(1-&gt;2)-[beta-D-GlcNAc-(1-&gt;6)]-alpha-D-Man-(1-&gt;6)]-beta-D-Man-(1-&gt;4)-beta-D-GlcNAc-(1-&gt;4)-beta-D-GlcNAc}-L-asparaginyl-[protein] + UDP + H(+). It catalyses the reaction an N(4)-{beta-D-GlcNAc-(1-&gt;2)-alpha-D-Man-(1-&gt;3)-[beta-D-GlcNAc-(1-&gt;2)-alpha-D-Man-(1-&gt;6)]-beta-D-Man-(1-&gt;4)-beta-D-GlcNAc-(1-&gt;4)-[alpha-L-Fuc-(1-&gt;6)]-beta-D-GlcNAc}-L-asparaginyl-[protein] + UDP-N-acetyl-alpha-D-glucosamine = N(4)-{beta-D-GlcNAc-(1-&gt;2)-[beta-D-GlcNAc-(1-&gt;4)]-alpha-D-Man-(1-&gt;3)-[beta-D-GlcNAc-(1-&gt;2)-alpha-D-Man-(1-&gt;6)]-beta-D-Man-(1-&gt;4)-beta-D-GlcNAc-(1-&gt;4)-[alpha-L-Fuc-(1-&gt;6)]-beta-D-GlcNAc}-asparaginyl-[protein] + UDP + H(+). The enzyme catalyses an N(4)-{beta-D-GlcNAc-(1-&gt;2)-alpha-D-Man-(1-&gt;3)-[beta-D-Gal-(1-&gt;4)-beta-D-GlcNAc-(1-&gt;2)-alpha-D-Man-(1-&gt;6)]-beta-D-Man-(1-&gt;4)-beta-D-GlcNAc-(1-&gt;4)-beta-D-GlcNAc}-L-asparaginyl-[protein] + UDP-N-acetyl-alpha-D-glucosamine = an N(4)-{beta-D-GlcNAc-(1-&gt;2)-[beta-D-GlcNAc-(1-&gt;4)]-alpha-D-Man-(1-&gt;3)-[beta-D-Gal-(1-&gt;4)-beta-D-GlcNAc-(1-&gt;2)-alpha-D-Man-(1-&gt;6)]-beta-D-Man-(1-&gt;4)-beta-D-GlcNAc-(1-&gt;4)-beta-D-GlcNAc}-L-asparaginyl-[protein] + UDP + H(+). The catalysed reaction is N(4)-{beta-D-GlcNAc-(1-&gt;2)-alpha-D-Man-(1-&gt;3)-[alpha-D-Man-(1-&gt;3)-{alpha-D-Man-(1-&gt;6)}-alpha-D-Man-(1-&gt;6)]-beta-D-Man-(1-&gt;4)-beta-D-GlcNAc-(1-&gt;4)-beta-D-GlcNAc}-asparaginyl-[protein] + UDP-N-acetyl-alpha-D-glucosamine = N(4)-{beta-D-GlcNAc-(1-&gt;2)-[beta-D-GlcNAc-(1-&gt;4)]-alpha-D-Man-(1-&gt;3)-[alpha-D-Man-(1-&gt;3)-{alpha-D-Man-(1-&gt;6)}-alpha-D-Man-(1-&gt;6)]-beta-D-Man-(1-&gt;4)-beta-D-GlcNAc-(1-&gt;4)-beta-D-GlcNAc}-asparaginyl-[protein] + UDP + H(+). It carries out the reaction N(4)-{beta-D-GlcNAc-(1-&gt;2)-alpha-D-Man-(1-&gt;3)-beta-D-Man-(1-&gt;4)-beta-D-GlcNAc-(1-&gt;4)-beta-D-GlcNAc}-asparaginyl-[protein] + UDP-N-acetyl-alpha-D-glucosamine = N(4)-{beta-D-GlcNAc-(1-&gt;2)-[beta-D-GlcNAc-(1-&gt;4)]-alpha-D-Man-(1-&gt;3)-beta-D-Man-(1-&gt;4)-beta-D-GlcNAc-(1-&gt;4)-beta-D-GlcNAc}-asparaginyl-[protein] + UDP + H(+). The protein operates within protein modification; protein glycosylation. With respect to regulation, inhibited by UDP. Glycosyltransferase that catalyze the transfer of GlcNAc from UDP-GlcNAc to the GlcNAcbeta1-2Manalpha1-3 arm of the core structure of N-linked glycans through a beta1-4 linkage and participates in the production of tri- and tetra-antennary N-linked sugar chains. Involved in glucose transport by mediating SLC2A2/GLUT2 glycosylation, thereby controlling cell-surface expression of SLC2A2 in pancreatic beta cells. In Bos taurus (Bovine), this protein is Alpha-1,3-mannosyl-glycoprotein 4-beta-N-acetylglucosaminyltransferase A.